A 369-amino-acid polypeptide reads, in one-letter code: Tyrosine-protein phosphatase non-receptor type 5 (369 aa).

At Ser49 the chain carries Phosphoserine; by PKA. Thr59 is modified (phosphothreonine; by MAPK). At Ser72 the chain carries Phosphoserine; by MAPK. The Tyrosine-protein phosphatase domain occupies 104–359 (LQAEFFEIPM…QFVHHAMSLY (256 aa)). Substrate is bound by residues Asp265, 300 to 306 (CSAGIGR), and Gln344. Cys300 functions as the Phosphocysteine intermediate in the catalytic mechanism.

It belongs to the protein-tyrosine phosphatase family. Non-receptor class subfamily. In terms of processing, phosphorylation at Ser-49 by PKA deactivates PTPN5. Phosphorylation at Thr-59 and Ser-72 by MAPKs stabilizes the phosphatase, dephosphorylation of these sites results in ubiquitin-mediated degradation of the active phosphatase. Expressed in the central nervous system except in the cerebellum. Enriched within the striatum relative to other brain areas.

It is found in the cytoplasm. The catalysed reaction is O-phospho-L-tyrosyl-[protein] + H2O = L-tyrosyl-[protein] + phosphate. In terms of biological role, may regulate the activity of several effector molecules involved in synaptic plasticity and neuronal cell survival, including MAPKs, Src family kinases and NMDA receptors. The sequence is that of Tyrosine-protein phosphatase non-receptor type 5 (Ptpn5) from Rattus norvegicus (Rat).